A 368-amino-acid polypeptide reads, in one-letter code: tRNA-specific 2-thiouridylase MnmA (368 aa).

Residues 11 to 18 and Met-37 contribute to the ATP site; that span reads GMSGGVDS. Positions 97–99 are interaction with target base in tRNA; it reads NPD. Cys-102 functions as the Nucleophile in the catalytic mechanism. Cysteines 102 and 199 form a disulfide. Gly-127 contacts ATP. The tract at residues 149-151 is interaction with tRNA; the sequence is KDQ. Catalysis depends on Cys-199, which acts as the Cysteine persulfide intermediate. An interaction with tRNA region spans residues 311–312; that stretch reads RY.

This sequence belongs to the MnmA/TRMU family. As to quaternary structure, interacts with TusE.

It is found in the cytoplasm. The enzyme catalyses S-sulfanyl-L-cysteinyl-[protein] + uridine(34) in tRNA + AH2 + ATP = 2-thiouridine(34) in tRNA + L-cysteinyl-[protein] + A + AMP + diphosphate + H(+). Catalyzes the 2-thiolation of uridine at the wobble position (U34) of tRNA(Lys), tRNA(Glu) and tRNA(Gln), leading to the formation of s(2)U34, the first step of tRNA-mnm(5)s(2)U34 synthesis. Sulfur is provided by IscS, via a sulfur-relay system. Binds ATP and its substrate tRNAs. The chain is tRNA-specific 2-thiouridylase MnmA from Salmonella paratyphi B (strain ATCC BAA-1250 / SPB7).